We begin with the raw amino-acid sequence, 127 residues long: Ribonuclease P protein component (127 aa).

Belongs to the RnpA family. Consists of a catalytic RNA component (M1 or rnpB) and a protein subunit.

The enzyme catalyses Endonucleolytic cleavage of RNA, removing 5'-extranucleotides from tRNA precursor.. In terms of biological role, RNaseP catalyzes the removal of the 5'-leader sequence from pre-tRNA to produce the mature 5'-terminus. It can also cleave other RNA substrates such as 4.5S RNA. The protein component plays an auxiliary but essential role in vivo by binding to the 5'-leader sequence and broadening the substrate specificity of the ribozyme. In Rippkaea orientalis (strain PCC 8801 / RF-1) (Cyanothece sp. (strain PCC 8801)), this protein is Ribonuclease P protein component.